Consider the following 309-residue polypeptide: Porphobilinogen deaminase (309 aa).

S-(dipyrrolylmethanemethyl)cysteine is present on Cys-241.

It belongs to the HMBS family. As to quaternary structure, monomer. It depends on dipyrromethane as a cofactor.

The catalysed reaction is 4 porphobilinogen + H2O = hydroxymethylbilane + 4 NH4(+). It participates in porphyrin-containing compound metabolism; protoporphyrin-IX biosynthesis; coproporphyrinogen-III from 5-aminolevulinate: step 2/4. Tetrapolymerization of the monopyrrole PBG into the hydroxymethylbilane pre-uroporphyrinogen in several discrete steps. This is Porphobilinogen deaminase from Bacillus cereus (strain B4264).